Here is a 163-residue protein sequence, read N- to C-terminus: uncharacterized protein (163 aa).

A coiled-coil region spans residues 101 to 162; it reads LESMKVERKP…KMGERILERE (62 aa).

This is an uncharacterized protein from Aquifex aeolicus (strain VF5).